Reading from the N-terminus, the 67-residue chain is uncharacterized protein (67 aa).

It to E.coli YbdD.

This is an uncharacterized protein from Escherichia coli O157:H7.